The following is a 262-amino-acid chain: Abhydrolase domain-containing protein ACTT2-2 (262 aa).

Positions 260 to 262 (SKL) match the Peroxisomal targeting signal type 1 motif.

The protein belongs to the AB hydrolase superfamily. AKT2 hydrolase family.

It localises to the peroxisome. It participates in mycotoxin biosynthesis. Its function is as follows. Abhydrolase domain-containing protein; part of the gene clusters that mediate the biosynthesis of the host-selective toxins (HSTs) ACT-toxins responsible for brown spot of tangerine disease by the tangerine pathotype which affects tangerines and mandarins. ACT-toxins consist of three moieties, 9,10-epoxy-8-hydroxy-9-methyl-decatrienoic acid (EDA), valine and a polyketide. ACT-toxin I is toxic to both citrus and pear; toxin II the 5''-deoxy derivative of ACT-toxin I, is highly toxic to pear and slightly toxic to citrus. On cellular level, ACT-toxins affect plasma membrane of susceptible cells and cause a sudden increase in loss of K(+) after a few minutes of toxin treatment. The acyl-CoA ligase ACTT1, the hydrolase ACTT2, the enoyl-CoA hydratases ACTT3 and ACTT6, and the acyl-CoA synthetase ACTT5 are all involved in the biosynthesis of the AK-, AF- and ACT-toxin common 9,10-epoxy-8-hydroxy-9-methyl-decatrienoic acid (EDA) structural moiety. The exact role of each enzyme, and of additional enzymes identified within the AF-toxin clusters have still to be determined. On the other hand, ACTTS1 to ACTTS4 are specific to the tangerine pathotype. The function of ACTTS3 is to elongate the polyketide chain portion of ACT-toxin that is unique to this toxin. The enoyl-reductase ACTTS2 might complement the missing enoyl-reductase (ER) domain in ACTTS3 in the synthesis of the polyketide portion of ACT-toxin. The roles of the nonribosomal peptide synthetases-related proteins ACTTS1 and ACTTS4 have also still not been elucidated. The polypeptide is Abhydrolase domain-containing protein ACTT2-2 (ACTT2-2) (Alternaria alternata (Alternaria rot fungus)).